A 437-amino-acid polypeptide reads, in one-letter code: Trigger factor (437 aa).

One can recognise a PPIase FKBP-type domain in the interval 163–248 (GDIAVINFEG…LNQIKAKVLP (86 aa)).

Belongs to the FKBP-type PPIase family. Tig subfamily.

The protein resides in the cytoplasm. The enzyme catalyses [protein]-peptidylproline (omega=180) = [protein]-peptidylproline (omega=0). Involved in protein export. Acts as a chaperone by maintaining the newly synthesized protein in an open conformation. Functions as a peptidyl-prolyl cis-trans isomerase. The chain is Trigger factor from Bdellovibrio bacteriovorus (strain ATCC 15356 / DSM 50701 / NCIMB 9529 / HD100).